Here is a 130-residue protein sequence, read N- to C-terminus: MAKTVKKSGPKKAKRNVPNGVAHIQSTFNNTIVSITDTAGEVISWSSAGASGFKGARKGTPFAAQTAAEAAARRALDQGMRQIEVLVRGPGSGRETAIRALQVAGLEITLIRDVTPLPHNGCRRPKRRRV.

This sequence belongs to the universal ribosomal protein uS11 family. Part of the 30S ribosomal subunit. Interacts with proteins S7 and S18. Binds to IF-3.

Located on the platform of the 30S subunit, it bridges several disparate RNA helices of the 16S rRNA. Forms part of the Shine-Dalgarno cleft in the 70S ribosome. This Synechococcus sp. (strain CC9605) protein is Small ribosomal subunit protein uS11.